A 402-amino-acid chain; its full sequence is CCA-adding enzyme (402 aa).

ATP is bound by residues Gly32 and Arg35. CTP contacts are provided by Gly32 and Arg35. Mg(2+)-binding residues include Asp45 and Asp47. ATP is bound by residues Arg119, Asp162, Arg165, Arg168, and Arg171. Residues Arg119, Asp162, Arg165, Arg168, and Arg171 each contribute to the CTP site.

The protein belongs to the tRNA nucleotidyltransferase/poly(A) polymerase family. Bacterial CCA-adding enzyme type 3 subfamily. In terms of assembly, homodimer. Requires Mg(2+) as cofactor.

It carries out the reaction a tRNA precursor + 2 CTP + ATP = a tRNA with a 3' CCA end + 3 diphosphate. It catalyses the reaction a tRNA with a 3' CCA end + 2 CTP + ATP = a tRNA with a 3' CCACCA end + 3 diphosphate. In terms of biological role, catalyzes the addition and repair of the essential 3'-terminal CCA sequence in tRNAs without using a nucleic acid template. Adds these three nucleotides in the order of C, C, and A to the tRNA nucleotide-73, using CTP and ATP as substrates and producing inorganic pyrophosphate. tRNA 3'-terminal CCA addition is required both for tRNA processing and repair. Also involved in tRNA surveillance by mediating tandem CCA addition to generate a CCACCA at the 3' terminus of unstable tRNAs. While stable tRNAs receive only 3'-terminal CCA, unstable tRNAs are marked with CCACCA and rapidly degraded. This chain is CCA-adding enzyme, found in Lactococcus lactis subsp. cremoris (strain MG1363).